We begin with the raw amino-acid sequence, 382 residues long: Opsin Rh5 (382 aa).

Residues 1–49 lie on the Extracellular side of the membrane; sequence MHINGPSGPQAYVNDSLGDGSVFPMGHGYPAEYQHMVHAHWRGFREAPI. Asn14 is a glycosylation site (N-linked (GlcNAc...) asparagine). A helical membrane pass occupies residues 50-76; the sequence is YYHAGFYIAFIVLMLSSIFGNGLVIWI. Topologically, residues 77–88 are cytoplasmic; that stretch reads FSTSKSLRTPSN. The helical transmembrane segment at 89–112 threads the bilayer; it reads LLILNLAIFDLFMCTNMPHYLINA. Over 113-127 the chain is Extracellular; sequence TVGYIVGGDLGCDIY. An intrachain disulfide couples Cys124 to Cys201. A helical membrane pass occupies residues 128-147; it reads ALNGGISGMGASITNAFIAF. Topologically, residues 148–165 are cytoplasmic; that stretch reads DRYKTISNPIDGRLSYGQ. Residues 166 to 190 traverse the membrane as a helical segment; sequence IVLLILFTWLWATPFSVLPLFQIWG. Topologically, residues 191-214 are extracellular; the sequence is RYQPEGFLTTCSFDYLTNTDENRL. Residues 215-242 traverse the membrane as a helical segment; sequence FVRTIFVWSYVIPMTMILVSYYKLFTHV. The Cytoplasmic portion of the chain corresponds to 243-278; that stretch reads RVHEKMLAEQAKKMNVKSLSANANADNMSVELRIAK. A helical transmembrane segment spans residues 279–302; that stretch reads AALIIYMLFILAWTPYSVVALIGC. Over 303-310 the chain is Extracellular; it reads FGEQQLIT. The helical transmembrane segment at 311 to 335 threads the bilayer; that stretch reads PFVSMLPCLACKSVSCLDPWVYATS. Lys322 is modified (N6-(retinylidene)lysine). Residues 336 to 382 lie on the Cytoplasmic side of the membrane; that stretch reads HPKYRLELERRLPWLGIREKHATSGTSGGQESVASVSGDTLALSVQN. Residues 357 to 382 form a disordered region; that stretch reads ATSGTSGGQESVASVSGDTLALSVQN. Residues 358–382 are compositionally biased toward polar residues; sequence TSGTSGGQESVASVSGDTLALSVQN.

This sequence belongs to the G-protein coupled receptor 1 family. Opsin subfamily. In terms of processing, phosphorylated on some or all of the serine and threonine residues present in the C-terminal region. As to expression, expressed specifically in the retina. Each Drosophila eye is composed of 800 facets or ommatidia. Each ommatidium contains 8 photoreceptor cells (R1-R8), the R1 to R6 cells are outer cells, while R7 and R8 are inner cells. Rh5 is expressed only in R8 photoreceptor cells in a subset of ommatidia.

The protein localises to the cell projection. The protein resides in the rhabdomere membrane. Visual pigments are the light-absorbing molecules that mediate vision. They consist of an apoprotein, opsin, covalently linked to cis-retinal. The protein is Opsin Rh5 (Rh5) of Drosophila melanogaster (Fruit fly).